The sequence spans 172 residues: Ribosome maturation factor RimM (172 aa).

The region spanning A95–L168 is the PRC barrel domain.

It belongs to the RimM family. Binds ribosomal protein uS19.

The protein localises to the cytoplasm. In terms of biological role, an accessory protein needed during the final step in the assembly of 30S ribosomal subunit, possibly for assembly of the head region. Essential for efficient processing of 16S rRNA. May be needed both before and after RbfA during the maturation of 16S rRNA. It has affinity for free ribosomal 30S subunits but not for 70S ribosomes. The protein is Ribosome maturation factor RimM of Streptococcus equi subsp. zooepidemicus (strain H70).